The chain runs to 354 residues: Uroporphyrinogen decarboxylase (354 aa).

Residues 27-31 (RQAGR), aspartate 77, tyrosine 154, threonine 209, and histidine 327 contribute to the substrate site.

It belongs to the uroporphyrinogen decarboxylase family. Homodimer.

Its subcellular location is the cytoplasm. The catalysed reaction is uroporphyrinogen III + 4 H(+) = coproporphyrinogen III + 4 CO2. Its pathway is porphyrin-containing compound metabolism; protoporphyrin-IX biosynthesis; coproporphyrinogen-III from 5-aminolevulinate: step 4/4. Its function is as follows. Catalyzes the decarboxylation of four acetate groups of uroporphyrinogen-III to yield coproporphyrinogen-III. This chain is Uroporphyrinogen decarboxylase, found in Escherichia coli O17:K52:H18 (strain UMN026 / ExPEC).